The sequence spans 323 residues: Serine/threonine-protein phosphatase PP1-gamma catalytic subunit (323 aa).

N-acetylalanine is present on alanine 2. 4 residues coordinate Mn(2+): aspartate 64, histidine 66, aspartate 92, and asparagine 124. Histidine 125 functions as the Proton donor in the catalytic mechanism. The Mn(2+) site is built by histidine 173 and histidine 248. Positions 302–323 (KKPNATRPVTPPRGMITKQAKK) are disordered. Phosphothreonine occurs at positions 307 and 311.

It belongs to the PPP phosphatase family. PP-1 subfamily. PP1 comprises a catalytic subunit, PPP1CA, PPP1CB or PPP1CC, which is folded into its native form by inhibitor 2 and glycogen synthetase kinase 3, and then complexed to one or several targeting or regulatory subunits. PPP1R12A, PPP1R12B and PPP1R12C mediate binding to myosin. PPP1R3A (in skeletal muscle), PPP1R3B (in liver), PPP1R3C, PPP1R3D and PPP1R3F (in brain) mediate binding to glycogen. Interacts with cyanobacterial toxin microcystin; disulfide-linked. Interacts with PPP1R3B and PPP1R7. Isoform 2 interacts with SPZ1. Interacts with CDCA2. PPP1R15A and PPP1R15B mediate binding to EIF2S1. Part of a complex containing PPP1R15B, PP1 and NCK1/2. Interacts with IKFZ1; the interaction targets PPP1CC to pericentromeric heterochromatin, dephosphorylates IKAROS, stabilizes it and prevents it from degradation. Interacts with PPP1R42; the interaction is direct. Interacts with NOM1 and PPP1R8. Component of the PTW/PP1 phosphatase complex, composed of PPP1R10/PNUTS, TOX4, WDR82, and PPP1CA or PPP1CB or PPP1CC. Interacts with PPP1R8. Interacts with isoform 1 and isoform 4 NEK2. Interacts with URI1; the interaction is phosphorylation-dependent and occurs in a growth factor-dependent manner. Interacts with FOXP3. Interacts with TMEM225 (via RVxF motif). Interacts with MKI67. Interacts with RRP1B; this targets PPP1CC to the nucleolus. Interacts with PPP1R2B. Found in a complex with PPP1CA, PPP1CC, SHC1 and PEAK1. Interacts with DYNLT4. Interacts (via RVxF motif) with FIRRM; regulates PLK1 kinase activity. Interacts with the KNL1 complex subunit KNL1; the interaction is direct and mutually exclusive with KNL1 binding to microtubules. Component of the SHOC2-MRAS-PP1c (SMP) complex consisting of SHOC2, GTP-bound M-Ras/MRAS and the catalytic subunit of protein phosphatase 1 (either PPP1CA, PPP1CB or PPP1CC). SHOC2 and PP1c preferably bind M-Ras/MRAS, but they also bind K-Ras/KRAS, N-Ras/NRAS and H-Ras/HRAS; these interactions are GTP-dependent and both SHOC2 and PP1c are required to form a stable complex. Interacts with SHOC2 in the absence of Ras GTPases. Mn(2+) is required as a cofactor. In terms of processing, phosphorylated by NEK2.

It is found in the cytoplasm. The protein localises to the nucleus. It localises to the nucleolus. Its subcellular location is the nucleoplasm. The protein resides in the nucleus speckle. It is found in the chromosome. The protein localises to the centromere. It localises to the kinetochore. Its subcellular location is the cleavage furrow. The protein resides in the midbody. It is found in the mitochondrion. The protein localises to the cytoskeleton. It localises to the microtubule organizing center. The enzyme catalyses O-phospho-L-seryl-[protein] + H2O = L-seryl-[protein] + phosphate. It catalyses the reaction O-phospho-L-threonyl-[protein] + H2O = L-threonyl-[protein] + phosphate. Its activity is regulated as follows. Inactivated by binding to URI1. The phosphatase activity of the PPP1R15A-PP1 complex toward EIF2S1 is specifically inhibited by Salubrinal, a drug that protects cells from endoplasmic reticulum stress. Functionally, protein phosphatase that associates with over 200 regulatory proteins to form highly specific holoenzymes which dephosphorylate hundreds of biological targets. Protein phosphatase 1 (PP1) is essential for cell division, and participates in the regulation of glycogen metabolism, muscle contractility and protein synthesis. Dephosphorylates RPS6KB1. Involved in regulation of ionic conductances and long-term synaptic plasticity. May play an important role in dephosphorylating substrates such as the postsynaptic density-associated Ca(2+)/calmodulin dependent protein kinase II. Component of the PTW/PP1 phosphatase complex, which plays a role in the control of chromatin structure and cell cycle progression during the transition from mitosis into interphase. In balance with CSNK1D and CSNK1E, determines the circadian period length, through the regulation of the speed and rhythmicity of PER1 and PER2 phosphorylation. May dephosphorylate CSNK1D and CSNK1E. Regulates the recruitment of the SKA complex to kinetochores. Dephosphorylates the 'Ser-418' residue of FOXP3 in regulatory T-cells (Treg) from patients with rheumatoid arthritis, thereby inactivating FOXP3 and rendering Treg cells functionally defective. Together with PPP1CA (PP1-alpha subunit), dephosphorylates IFIH1/MDA5 and RIG-I leading to their activation and a functional innate immune response. Core component of the SHOC2-MRAS-PP1c (SMP) holophosphatase complex that regulates the MAPK pathway activation. The SMP complex specifically dephosphorylates the inhibitory phosphorylation at 'Ser-259' of RAF1 kinase, 'Ser-365' of BRAF kinase and 'Ser-214' of ARAF kinase, stimulating their kinase activities. Dephosphorylates MKI67 at the onset of anaphase. The SMP complex enhances the dephosphorylation activity and substrate specificity of PP1c. This Homo sapiens (Human) protein is Serine/threonine-protein phosphatase PP1-gamma catalytic subunit (PPP1CC).